A 639-amino-acid chain; its full sequence is Mediator of RNA polymerase II transcription subunit 17 (639 aa).

Residues 160–187 (RLQSFNAAADKLLKSASRLENEVASETR) are a coiled coil.

The protein belongs to the Mediator complex subunit 17 family. Component of the Mediator complex.

The protein resides in the nucleus. Its function is as follows. Component of the Mediator complex, a coactivator involved in the regulated transcription of nearly all RNA polymerase II-dependent genes. Mediator functions as a bridge to convey information from gene-specific regulatory proteins to the basal RNA polymerase II transcription machinery. Mediator is recruited to promoters by direct interactions with regulatory proteins and serves as a scaffold for the assembly of a functional preinitiation complex with RNA polymerase II and the general transcription factors. This chain is Mediator of RNA polymerase II transcription subunit 17 (srb4), found in Aspergillus fumigatus (strain ATCC MYA-4609 / CBS 101355 / FGSC A1100 / Af293) (Neosartorya fumigata).